The chain runs to 213 residues: MPDFKIVVSDPKTKEDKKEKLKVKVSDKVKSNQGEKEGKAIPLARINDKIKQALNLDDFLTLEITKQEGDKKVKIKGHFKIEVDNTVPDGEVWISKSMAEKFGAEEFEALAYRTRAFQLSLDQSKLPNLVGTKIGDVIDINVSGVNLKLKITGGSDNSGFSMRFDVGGGAKRKILVSGPPGYYPKEDGLRRKRTVRGNMITPEIVQINTIMIR.

This sequence belongs to the eukaryotic ribosomal protein eS6 family.

The sequence is that of Small ribosomal subunit protein eS6 from Sulfolobus acidocaldarius (strain ATCC 33909 / DSM 639 / JCM 8929 / NBRC 15157 / NCIMB 11770).